A 52-amino-acid chain; its full sequence is UPF0181 protein HI_1434.2 (52 aa).

This sequence belongs to the UPF0181 family.

This chain is UPF0181 protein HI_1434.2, found in Haemophilus influenzae (strain ATCC 51907 / DSM 11121 / KW20 / Rd).